A 236-amino-acid chain; its full sequence is Probable transcriptional regulatory protein UU295 (236 aa).

This sequence belongs to the TACO1 family.

It is found in the cytoplasm. The sequence is that of Probable transcriptional regulatory protein UU295 from Ureaplasma parvum serovar 3 (strain ATCC 700970).